Here is a 364-residue protein sequence, read N- to C-terminus: Probable dual-specificity RNA methyltransferase RlmN (364 aa).

Glu109 serves as the catalytic Proton acceptor. The 229-residue stretch at 123 to 351 (PKARLTVCVS…VSVRYSRGLE (229 aa)) folds into the Radical SAM core domain. A disulfide bridge links Cys130 with Cys356. [4Fe-4S] cluster contacts are provided by Cys137, Cys141, and Cys144. S-adenosyl-L-methionine contacts are provided by residues 184-185 (GE), Ser214, 237-239 (SLH), and Asn313. The active-site S-methylcysteine intermediate is the Cys356.

Belongs to the radical SAM superfamily. RlmN family. The cofactor is [4Fe-4S] cluster.

The protein resides in the cytoplasm. The catalysed reaction is adenosine(2503) in 23S rRNA + 2 reduced [2Fe-2S]-[ferredoxin] + 2 S-adenosyl-L-methionine = 2-methyladenosine(2503) in 23S rRNA + 5'-deoxyadenosine + L-methionine + 2 oxidized [2Fe-2S]-[ferredoxin] + S-adenosyl-L-homocysteine. It catalyses the reaction adenosine(37) in tRNA + 2 reduced [2Fe-2S]-[ferredoxin] + 2 S-adenosyl-L-methionine = 2-methyladenosine(37) in tRNA + 5'-deoxyadenosine + L-methionine + 2 oxidized [2Fe-2S]-[ferredoxin] + S-adenosyl-L-homocysteine. Its function is as follows. Specifically methylates position 2 of adenine 2503 in 23S rRNA and position 2 of adenine 37 in tRNAs. This is Probable dual-specificity RNA methyltransferase RlmN from Nostoc punctiforme (strain ATCC 29133 / PCC 73102).